Here is a 163-residue protein sequence, read N- to C-terminus: Protein YtsP (163 aa).

It belongs to the free Met sulfoxide reductase family.

In Bacillus subtilis (strain 168), this protein is Protein YtsP (ytsP).